Here is a 146-residue protein sequence, read N- to C-terminus: UPF0742 protein SPAC977.02 (146 aa).

The helical transmembrane segment at 38-60 (LTVKYCLAVKLLIYLLYCWYIYS) threads the bilayer.

Belongs to the UPF0742 family.

It localises to the cytoplasm. It is found in the nucleus membrane. The protein is UPF0742 protein SPAC977.02 of Schizosaccharomyces pombe (strain 972 / ATCC 24843) (Fission yeast).